Reading from the N-terminus, the 367-residue chain is Heme A synthase (367 aa).

A run of 5 helical transmembrane segments spans residues A25–G45, L111–G131, W139–V159, L174–G194, and G210–A230. H274 is a binding site for heme. 3 helical membrane passes run I276–A296, A305–M325, and V327–I347. H335 provides a ligand contact to heme.

This sequence belongs to the COX15/CtaA family. Type 2 subfamily. In terms of assembly, interacts with CtaB. Requires heme b as cofactor.

It localises to the cell membrane. It carries out the reaction Fe(II)-heme o + 2 A + H2O = Fe(II)-heme a + 2 AH2. The protein operates within porphyrin-containing compound metabolism; heme A biosynthesis; heme A from heme O: step 1/1. In terms of biological role, catalyzes the conversion of heme O to heme A by two successive hydroxylations of the methyl group at C8. The first hydroxylation forms heme I, the second hydroxylation results in an unstable dihydroxymethyl group, which spontaneously dehydrates, resulting in the formyl group of heme A. This Rhizobium leguminosarum bv. trifolii (strain WSM2304) protein is Heme A synthase.